A 613-amino-acid polypeptide reads, in one-letter code: Transcription factor cbf11 (613 aa).

The segment at 32-58 (NNGLHNQEDGAGGRNENSERVGSGSPG) is disordered.

This sequence belongs to the Su(H) family.

The protein resides in the cytoplasm. Its subcellular location is the nucleus. Transcription factor that behaves as a negative regulator of adhesion. Recognizes specifically the canonical CSL response element GTGA/GGAA. May also play a cbf12-antagonistic role in the regulation of a number of other important processes such as extracellular material production, colony morphogenesis, ploidy maintenance, or meiosis. The sequence is that of Transcription factor cbf11 (cbf11) from Schizosaccharomyces pombe (strain 972 / ATCC 24843) (Fission yeast).